A 171-amino-acid chain; its full sequence is Transcription antitermination protein NusB (171 aa).

It belongs to the NusB family.

Functionally, involved in transcription antitermination. Required for transcription of ribosomal RNA (rRNA) genes. Binds specifically to the boxA antiterminator sequence of the ribosomal RNA (rrn) operons. The polypeptide is Transcription antitermination protein NusB (Brucella suis (strain ATCC 23445 / NCTC 10510)).